A 496-amino-acid chain; its full sequence is Probable histidine ammonia-lyase (496 aa).

A cross-link (5-imidazolinone (Ala-Gly)) is located at residues 141–143; sequence ASG. Ser-142 is subject to 2,3-didehydroalanine (Ser).

This sequence belongs to the PAL/histidase family. Post-translationally, contains an active site 4-methylidene-imidazol-5-one (MIO), which is formed autocatalytically by cyclization and dehydration of residues Ala-Ser-Gly.

Its subcellular location is the cytoplasm. The enzyme catalyses L-histidine = trans-urocanate + NH4(+). It participates in amino-acid degradation; L-histidine degradation into L-glutamate; N-formimidoyl-L-glutamate from L-histidine: step 1/3. The polypeptide is Probable histidine ammonia-lyase (Thermoplasma acidophilum (strain ATCC 25905 / DSM 1728 / JCM 9062 / NBRC 15155 / AMRC-C165)).